We begin with the raw amino-acid sequence, 509 residues long: MRISKANAYVAAIDQGTTSTRCIFIDAQGKVVSSASKEHRQIFPQQGWVEHDPEEIWDNIRSVVSQAMVSIDITPHEVASLGVTNQRETTVVWDKHTGEPVYNAIVWQDTRTSDICLEIAGEEGQEKWLDRTGLLINSYPSGPKIKWILDNVEGARERAEKGDLLFGTMDTWVLWNLTGGVRGDDGDDAIHVTDVTNASRTLLMDLRTQQWDPELCEALDIPMSMLPEIRPSVGEFRSVRHRGTLADVPITGVLGDQQAALFGQGGFHEGAAKNTYGTGLFLLMNTGTSLKISEHGLLSTIAYQREGSAPVYALEGSVSMGGSLVQWLRDNLQLIPNAPAIENLAREVEDNGGVHVVPAFTGLFAPRWRPDARGVITGLTRFANRKHIARAVLEANAFQTREVVDAMAKDAGKALESLRVDGAMVENDLLMQMQADFLGIDVQRLEDVETTAVGVAFAAGLGSGFFKTTDEIEKLIAVKKVWNPDMSEEERERRYAEWNRAVEHSYDQA.

Thr-17 provides a ligand contact to ADP. ATP is bound by residues Thr-17, Thr-18, and Ser-19. Thr-17 lines the sn-glycerol 3-phosphate pocket. Arg-21 lines the ADP pocket. Positions 87, 88, 139, and 256 each coordinate sn-glycerol 3-phosphate. Positions 87, 88, 139, 256, and 257 each coordinate glycerol. Positions 278 and 322 each coordinate ADP. ATP-binding residues include Thr-278, Gly-322, Gln-326, and Ala-423. Ala-423 and Asn-427 together coordinate ADP.

This sequence belongs to the FGGY kinase family.

The catalysed reaction is glycerol + ATP = sn-glycerol 3-phosphate + ADP + H(+). Its pathway is polyol metabolism; glycerol degradation via glycerol kinase pathway; sn-glycerol 3-phosphate from glycerol: step 1/1. With respect to regulation, inhibited by fructose 1,6-bisphosphate (FBP). In terms of biological role, key enzyme in the regulation of glycerol uptake and metabolism. Catalyzes the phosphorylation of glycerol to yield sn-glycerol 3-phosphate. The protein is Glycerol kinase of Corynebacterium glutamicum (strain R).